The sequence spans 73 residues: Ocellatin-PT8 (73 aa).

Residues 1 to 22 form the signal peptide; it reads MAFLKKSLFLVLFLGLVSLSIC. Residues 23-39 constitute a propeptide that is removed on maturation; it reads DEEKRQDEDDDDDDDEE.

In terms of tissue distribution, expressed by the skin glands.

The protein resides in the secreted. In terms of biological role, has antibacterial activity against Gram-negative bacteria E.coli ATCC 25922 (MIC=60 uM), K.pneumoniae ATCC 700603 (MIC=240 uM) and S.choleraesuis ATCC 14028 (MIC=240 uM) and against Gram-positive bacterium S.aureus ATCC 29313 (MIC=240 uM). Shows no hemolytic activity and no cytotoxicity. The chain is Ocellatin-PT8 from Leptodactylus pustulatus (Ceara white-lipped frog).